A 436-amino-acid polypeptide reads, in one-letter code: Phosphomethylpyrimidine synthase (436 aa).

Residues Asn69, Met98, Tyr127, His163, 185-187, 226-229, and Glu265 contribute to the substrate site; these read SRG and DACR. His269 lines the Zn(2+) pocket. Tyr292 is a binding site for substrate. His333 contacts Zn(2+). Residues Cys409, Cys412, and Cys416 each coordinate [4Fe-4S] cluster.

This sequence belongs to the ThiC family. It depends on [4Fe-4S] cluster as a cofactor.

The enzyme catalyses 5-amino-1-(5-phospho-beta-D-ribosyl)imidazole + S-adenosyl-L-methionine = 4-amino-2-methyl-5-(phosphooxymethyl)pyrimidine + CO + 5'-deoxyadenosine + formate + L-methionine + 3 H(+). The protein operates within cofactor biosynthesis; thiamine diphosphate biosynthesis. In terms of biological role, catalyzes the synthesis of the hydroxymethylpyrimidine phosphate (HMP-P) moiety of thiamine from aminoimidazole ribotide (AIR) in a radical S-adenosyl-L-methionine (SAM)-dependent reaction. This chain is Phosphomethylpyrimidine synthase, found in Clostridium acetobutylicum (strain ATCC 824 / DSM 792 / JCM 1419 / IAM 19013 / LMG 5710 / NBRC 13948 / NRRL B-527 / VKM B-1787 / 2291 / W).